Here is a 221-residue protein sequence, read N- to C-terminus: Thiamine-phosphate synthase (221 aa).

4-amino-2-methyl-5-(diphosphooxymethyl)pyrimidine is bound by residues 39–43 (QLRCK) and N76. D77 and D96 together coordinate Mg(2+). S114 contacts 4-amino-2-methyl-5-(diphosphooxymethyl)pyrimidine. Residue 140–142 (TPT) coordinates 2-[(2R,5Z)-2-carboxy-4-methylthiazol-5(2H)-ylidene]ethyl phosphate. K143 contacts 4-amino-2-methyl-5-(diphosphooxymethyl)pyrimidine. G171 contacts 2-[(2R,5Z)-2-carboxy-4-methylthiazol-5(2H)-ylidene]ethyl phosphate.

This sequence belongs to the thiamine-phosphate synthase family. It depends on Mg(2+) as a cofactor.

The catalysed reaction is 2-[(2R,5Z)-2-carboxy-4-methylthiazol-5(2H)-ylidene]ethyl phosphate + 4-amino-2-methyl-5-(diphosphooxymethyl)pyrimidine + 2 H(+) = thiamine phosphate + CO2 + diphosphate. It carries out the reaction 2-(2-carboxy-4-methylthiazol-5-yl)ethyl phosphate + 4-amino-2-methyl-5-(diphosphooxymethyl)pyrimidine + 2 H(+) = thiamine phosphate + CO2 + diphosphate. The enzyme catalyses 4-methyl-5-(2-phosphooxyethyl)-thiazole + 4-amino-2-methyl-5-(diphosphooxymethyl)pyrimidine + H(+) = thiamine phosphate + diphosphate. Its pathway is cofactor biosynthesis; thiamine diphosphate biosynthesis; thiamine phosphate from 4-amino-2-methyl-5-diphosphomethylpyrimidine and 4-methyl-5-(2-phosphoethyl)-thiazole: step 1/1. In terms of biological role, condenses 4-methyl-5-(beta-hydroxyethyl)thiazole monophosphate (THZ-P) and 2-methyl-4-amino-5-hydroxymethyl pyrimidine pyrophosphate (HMP-PP) to form thiamine monophosphate (TMP). The protein is Thiamine-phosphate synthase of Deinococcus geothermalis (strain DSM 11300 / CIP 105573 / AG-3a).